A 451-amino-acid chain; its full sequence is Gamma-aminobutyric acid receptor subunit alpha-2 (451 aa).

An N-terminal signal peptide occupies residues methionine 1–alanine 28. Residues asparagine 29–lysine 249 are Extracellular-facing. Asparagine 38 carries N-linked (GlcNAc...) asparagine glycosylation. Arginine 94 contacts 4-aminobutanoate. A glycan (N-linked (GlcNAc...) asparagine) is linked at asparagine 138. Residue threonine 157 coordinates 4-aminobutanoate. Cysteine 166 and cysteine 180 form a disulfide bridge. The chain crosses the membrane as a helical span at residues isoleucine 250–valine 270. Over serine 271–proline 280 the chain is Cytoplasmic. A helical membrane pass occupies residues alanine 281–alanine 300. The Extracellular portion of the chain corresponds to arginine 301–threonine 311. Residues alanine 312–alanine 332 form a helical membrane-spanning segment. Over threonine 333–methionine 420 the chain is Cytoplasmic. A disordered region spans residues lysine 389–lysine 408. Positions proline 396–lysine 408 are enriched in basic and acidic residues. A helical membrane pass occupies residues serine 421–leucine 441. At asparagine 442 to proline 451 the chain is on the extracellular side.

This sequence belongs to the ligand-gated ion channel (TC 1.A.9) family. Gamma-aminobutyric acid receptor (TC 1.A.9.5) subfamily. GABRA2 sub-subfamily. Heteropentamer, formed by a combination of alpha (GABRA1-6), beta (GABRB1-3), gamma (GABRG1-3), delta (GABRD), epsilon (GABRE), rho (GABRR1-3), pi (GABRP) and theta (GABRQ) subunits, each subunit exhibiting distinct physiological and pharmacological properties. Interacts with UBQLN1. Interacts with KIF21B. Interacts with LHFPL4. Interacts with SHISA7; interaction leads to the regulation of GABA(A) receptor trafficking, channel deactivation kinetics and pharmacology. In terms of processing, glycosylated.

It is found in the postsynaptic cell membrane. The protein localises to the cell membrane. The protein resides in the cytoplasmic vesicle membrane. It localises to the cell projection. Its subcellular location is the dendrite. It catalyses the reaction chloride(in) = chloride(out). With respect to regulation, activated by pentobarbital. Inhibited by the antagonist bicuculline. Functionally, alpha subunit of the heteropentameric ligand-gated chloride channel gated by gamma-aminobutyric acid (GABA), a major inhibitory neurotransmitter in the brain. GABA-gated chloride channels, also named GABA(A) receptors (GABAAR), consist of five subunits arranged around a central pore and contain GABA active binding site(s) located at the alpha and beta subunit interface(s). When activated by GABA, GABAARs selectively allow the flow of chloride anions across the cell membrane down their electrochemical gradient. Chloride influx into the postsynaptic neuron following GABAAR opening decreases the neuron ability to generate a new action potential, thereby reducing nerve transmission. The alpha-2 subunit exhibits synaptogenic activity together with beta-2 and very little to no activity together with beta-3, the gamma-2 subunit being necessary but not sufficient to induce rapid synaptic contacts formation. This Mus musculus (Mouse) protein is Gamma-aminobutyric acid receptor subunit alpha-2.